Reading from the N-terminus, the 98-residue chain is NADH-ubiquinone oxidoreductase chain 4L (98 aa).

A run of 3 helical transmembrane segments spans residues 1 to 21 (MSLVHINILMAFTMSLTGLLM), 29 to 49 (ALLCLEGMVLSLFILATLTIL), and 61 to 81 (IILLVFAACEAAIGLALLIMI).

It belongs to the complex I subunit 4L family. As to quaternary structure, core subunit of respiratory chain NADH dehydrogenase (Complex I) which is composed of 45 different subunits.

The protein resides in the mitochondrion inner membrane. It catalyses the reaction a ubiquinone + NADH + 5 H(+)(in) = a ubiquinol + NAD(+) + 4 H(+)(out). Its function is as follows. Core subunit of the mitochondrial membrane respiratory chain NADH dehydrogenase (Complex I) which catalyzes electron transfer from NADH through the respiratory chain, using ubiquinone as an electron acceptor. Part of the enzyme membrane arm which is embedded in the lipid bilayer and involved in proton translocation. In Monodon monoceros (Narwhal), this protein is NADH-ubiquinone oxidoreductase chain 4L (MT-ND4L).